Reading from the N-terminus, the 1268-residue chain is SR-related and CTD-associated factor 8 (1268 aa).

Positions 1–139 (MEAVKTFNSE…PLLDMAAGIP (139 aa)) constitute a CID domain. A Phosphothreonine modification is found at Thr-6. Residue Lys-18 forms a Glycyl lysine isopeptide (Lys-Gly) (interchain with G-Cter in SUMO1) linkage. Ser-273 is subject to Phosphoserine. Disordered stretches follow at residues 322 to 355 (QQQP…QQHF) and 385 to 469 (EIFE…PVRS). A compositionally biased stretch (polar residues) spans 342 to 354 (HSASPSQGSSQQH). Positions 394 to 443 (VAVRSRSRTHSRSRSRSPRKRRSRSRSGSRKRKHRKRSRSRSRERKRKSS) are enriched in basic residues. The span at 447-461 (SSERRAREREKERQK) shows a compositional bias: basic and acidic residues. The RRM domain maps to 477–551 (TTLWVGQVDK…KVIKIAWALN (75 aa)). The residue at position 615 (Thr-615) is a Phosphothreonine. Ser-617 is modified (phosphoserine). Residues 753-808 (AGNVFNPPSKAEPEEKVPHLTEHQIPSGENTRPVIPSDIPSSAPMLAQPPGASNTS) form a disordered region. Positions 763-774 (AEPEEKVPHLTE) are enriched in basic and acidic residues. An asymmetric dimethylarginine mark is found at Arg-915, Arg-925, and Arg-936. The interval 947–1063 (QRGIPPPSVL…GRDHFGRPPV (117 aa)) is disordered. Positions 961–970 (HPPPRGPFPP) are enriched in pro residues. 2 stretches are compositionally biased toward basic and acidic residues: residues 1009-1025 (EGDR…REGI) and 1032-1063 (DVRD…RPPV). At Arg-1071 the chain carries Asymmetric dimethylarginine. The interval 1199-1268 (ATSQRKGENV…VVESTETEGT (70 aa)) is disordered. Low complexity predominate over residues 1249–1262 (GTAAGVESEAVVES).

Interacts with POLR2A; via C-terminal heptapeptide repeat domain (CTD) phosphorylated at 'Ser-2' and 'Ser-5'. Identified in a complex with CDC5L and other spliceosomal proteins.

The protein resides in the nucleus. Its subcellular location is the nucleus matrix. In terms of biological role, anti-terminator protein required to prevent early mRNA termination during transcription. Together with SCAF4, acts by suppressing the use of early, alternative poly(A) sites, thereby preventing the accumulation of non-functional truncated proteins. Mechanistically, associates with the phosphorylated C-terminal heptapeptide repeat domain (CTD) of the largest RNA polymerase II subunit (POLR2A), and subsequently binds nascent RNA upstream of early polyadenylation sites to prevent premature mRNA transcript cleavage and polyadenylation. Independently of SCAF4, also acts as a positive regulator of transcript elongation. This chain is SR-related and CTD-associated factor 8, found in Rattus norvegicus (Rat).